The following is a 382-amino-acid chain: Mannitol-1-phosphate 5-dehydrogenase (382 aa).

3 to 14 (ALHFGAGNIGRG) provides a ligand contact to NAD(+). An N6-acetyllysine modification is found at Lys269.

This sequence belongs to the mannitol dehydrogenase family.

It carries out the reaction D-mannitol 1-phosphate + NAD(+) = beta-D-fructose 6-phosphate + NADH + H(+). The sequence is that of Mannitol-1-phosphate 5-dehydrogenase from Escherichia coli O17:K52:H18 (strain UMN026 / ExPEC).